The following is a 93-amino-acid chain: Putative pterin-4-alpha-carbinolamine dehydratase (93 aa).

This sequence belongs to the pterin-4-alpha-carbinolamine dehydratase family.

The catalysed reaction is (4aS,6R)-4a-hydroxy-L-erythro-5,6,7,8-tetrahydrobiopterin = (6R)-L-erythro-6,7-dihydrobiopterin + H2O. The chain is Putative pterin-4-alpha-carbinolamine dehydratase from Chloroflexus aurantiacus (strain ATCC 29366 / DSM 635 / J-10-fl).